The chain runs to 100 residues: Urease subunit gamma (100 aa).

The protein belongs to the urease gamma subunit family. Heterotrimer of UreA (gamma), UreB (beta) and UreC (alpha) subunits. Three heterotrimers associate to form the active enzyme.

Its subcellular location is the cytoplasm. It carries out the reaction urea + 2 H2O + H(+) = hydrogencarbonate + 2 NH4(+). It participates in nitrogen metabolism; urea degradation; CO(2) and NH(3) from urea (urease route): step 1/1. The chain is Urease subunit gamma from Pseudomonas putida (strain W619).